The sequence spans 480 residues: UDP-glucose 6-dehydrogenase 5 (480 aa).

Residues 8 to 13 (GAGYVG), D33, R38, 86 to 90 (VNTPT), 127 to 128 (ST), and E161 contribute to the NAD(+) site. Substrate contacts are provided by residues 157 to 161 (EFLAE), 216 to 223 (KLAANAFL), and 256 to 269 (RIGP…VGFG). C272 (nucleophile) is an active-site residue. 272–275 (CFQK) serves as a coordination point for NAD(+). 334–335 (FK) serves as a coordination point for substrate. NAD(+) is bound at residue R342. Residue S393 is modified to Phosphoserine. R447 contributes to the substrate binding site.

Belongs to the UDP-glucose/GDP-mannose dehydrogenase family.

The enzyme catalyses UDP-alpha-D-glucose + 2 NAD(+) + H2O = UDP-alpha-D-glucuronate + 2 NADH + 3 H(+). The protein operates within nucleotide-sugar biosynthesis; UDP-alpha-D-glucuronate biosynthesis; UDP-alpha-D-glucuronate from UDP-alpha-D-glucose: step 1/1. Its function is as follows. Involved in the biosynthesis of UDP-glucuronic acid (UDP-GlcA), providing nucleotide sugars for cell-wall polymers. In Oryza sativa subsp. japonica (Rice), this protein is UDP-glucose 6-dehydrogenase 5 (UGD5).